A 502-amino-acid polypeptide reads, in one-letter code: Maturase K (502 aa).

Belongs to the intron maturase 2 family. MatK subfamily.

The protein localises to the plastid. Its subcellular location is the chloroplast. Functionally, usually encoded in the trnK tRNA gene intron. Probably assists in splicing its own and other chloroplast group II introns. This is Maturase K from Brassica campestris (Field mustard).